The sequence spans 581 residues: Suppressor of cytokine signaling 7 (581 aa).

Disordered stretches follow at residues 1–23 (MVFR…EPGP), 89–109 (PPPP…DPTE), 123–272 (EAES…RTQS), and 297–316 (QRGL…RRSL). Pro residues-rich tracts occupy residues 89–99 (PPPPQPQPPAA), 154–164 (PPGPELPPVPF), and 187–198 (QPPPPPPPPGPL). Residues 124-494 (AESLETNSCS…GKFLYFLRSR (371 aa)) form a mediates interaction with SORBS3 region. Over residues 208-219 (GSFKIRLSRLFR) the composition is skewed to basic residues. Residues 303–313 (PHPPTPPPPPR) are compositionally biased toward pro residues. The region spanning 400–509 (WYWGPMNWED…PTPVQLLYPV (110 aa)) is the SH2 domain. Positions 504–554 (QLLYPVSRFSNVKSLQHLCRFRIRQLVRIDHIPDLPLPKPLISYIRKFYYY) constitute an SOCS box domain.

Substrate-recognition component of the ECS(SOCS7) complex, composed of SOCS7, CUL5, ELOB, ELOC and RNF7/RBX2. Interacts, via the third proline-rich region, with the second SH3 domain of the adapter protein NCK1. Also interacts with GRB2, INSR, PLCG1, SORBS3/vinexin, and phosphorylated STAT3 and STAT5. Interacts with SEPT6. Interacts with phosphorylated IRS4 and PIK3R1. Expressed in brain and leukocytes. Also in fetal lung fibroblasts and fetal brain.

It is found in the cytoplasm. The protein localises to the nucleus. The protein resides in the cell membrane. Its pathway is protein modification; protein ubiquitination. Its function is as follows. Substrate-recognition component of a cullin-5-RING E3 ubiquitin-protein ligase complex (ECS complex, also named CRL5 complex), which mediates the ubiquitination and subsequent proteasomal degradation of target proteins, such as DAB1 and IRS1. Specifically recognizes and binds phosphorylated proteins via its SH2 domain, promoting their ubiquitination. The ECS(SOCS7) complex acts as a key regulator of reelin signaling by mediating ubiquitination and degradation of phosphorylated DAB1 in the cortical plate of the developing cerebral cortex, thereby regulating neuron positioning during cortex development. Functions in insulin signaling and glucose homeostasis through IRS1 ubiquitination and subsequent proteasomal degradation. Also inhibits prolactin, growth hormone and leptin signaling by preventing STAT3 and STAT5 activation, sequestering them in the cytoplasm and reducing their binding to DNA. In Homo sapiens (Human), this protein is Suppressor of cytokine signaling 7.